Consider the following 342-residue polypeptide: MEAVQQNHSVCRGYCGVMLRSRSGGFFRRGFMLGNVEVILARPRGFCAGVERAVRTLESVASRYAGTREVYALHEIVHNLHVVNSFKKMGVKFVSALHEVPEGAVLVFSAHGVSQQIKEESRRKGLTVVDATCPLVTKVHLEIQRYDKSGYQVILVGHKGHREVEGSMGQVSNPVVLVQNVQDVQSIKTPSAAKLAYVTQTTLSMDDTAEIINALKLRFPQIVGPDLRDICYATQNRQTAVKAMSQMVDVVLAIGSKNSSNSNRLLDLAKAQNARAYLIDSYRNIDLEWLIGARRIGITAGASAPEILVQEVIDYLGLHANLKVRTMDGVSENITFKLPELD.

Cys-47 provides a ligand contact to [4Fe-4S] cluster. (2E)-4-hydroxy-3-methylbut-2-enyl diphosphate contacts are provided by His-78 and His-111. 2 residues coordinate dimethylallyl diphosphate: His-78 and His-111. Residues His-78 and His-111 each contribute to the isopentenyl diphosphate site. Cys-133 is a binding site for [4Fe-4S] cluster. His-161 is a (2E)-4-hydroxy-3-methylbut-2-enyl diphosphate binding site. His-161 provides a ligand contact to dimethylallyl diphosphate. His-161 lines the isopentenyl diphosphate pocket. Glu-163 acts as the Proton donor in catalysis. Residue Thr-201 coordinates (2E)-4-hydroxy-3-methylbut-2-enyl diphosphate. Position 231 (Cys-231) interacts with [4Fe-4S] cluster. Ser-259, Ser-260, Asn-261, and Ser-303 together coordinate (2E)-4-hydroxy-3-methylbut-2-enyl diphosphate. Ser-259, Ser-260, Asn-261, and Ser-303 together coordinate dimethylallyl diphosphate. 4 residues coordinate isopentenyl diphosphate: Ser-259, Ser-260, Asn-261, and Ser-303.

The protein belongs to the IspH family. [4Fe-4S] cluster serves as cofactor.

The catalysed reaction is isopentenyl diphosphate + 2 oxidized [2Fe-2S]-[ferredoxin] + H2O = (2E)-4-hydroxy-3-methylbut-2-enyl diphosphate + 2 reduced [2Fe-2S]-[ferredoxin] + 2 H(+). The enzyme catalyses dimethylallyl diphosphate + 2 oxidized [2Fe-2S]-[ferredoxin] + H2O = (2E)-4-hydroxy-3-methylbut-2-enyl diphosphate + 2 reduced [2Fe-2S]-[ferredoxin] + 2 H(+). It participates in isoprenoid biosynthesis; dimethylallyl diphosphate biosynthesis; dimethylallyl diphosphate from (2E)-4-hydroxy-3-methylbutenyl diphosphate: step 1/1. It functions in the pathway isoprenoid biosynthesis; isopentenyl diphosphate biosynthesis via DXP pathway; isopentenyl diphosphate from 1-deoxy-D-xylulose 5-phosphate: step 6/6. Functionally, catalyzes the conversion of 1-hydroxy-2-methyl-2-(E)-butenyl 4-diphosphate (HMBPP) into a mixture of isopentenyl diphosphate (IPP) and dimethylallyl diphosphate (DMAPP). Acts in the terminal step of the DOXP/MEP pathway for isoprenoid precursor biosynthesis. This is 4-hydroxy-3-methylbut-2-enyl diphosphate reductase from Anaplasma marginale (strain Florida).